Here is a 426-residue protein sequence, read N- to C-terminus: 3-phosphoshikimate 1-carboxyvinyltransferase (426 aa).

3-phosphoshikimate contacts are provided by Lys-22, Ser-23, and Arg-27. Lys-22 serves as a coordination point for phosphoenolpyruvate. Phosphoenolpyruvate contacts are provided by Gly-96 and Arg-124. Residues Ser-170, Ser-171, Gln-172, Ser-198, Asp-314, Asn-337, and Lys-341 each contribute to the 3-phosphoshikimate site. Gln-172 serves as a coordination point for phosphoenolpyruvate. Residue Asp-314 is the Proton acceptor of the active site. Residues Arg-345, Arg-387, and Lys-412 each contribute to the phosphoenolpyruvate site.

Belongs to the EPSP synthase family. As to quaternary structure, monomer.

It localises to the cytoplasm. It carries out the reaction 3-phosphoshikimate + phosphoenolpyruvate = 5-O-(1-carboxyvinyl)-3-phosphoshikimate + phosphate. The protein operates within metabolic intermediate biosynthesis; chorismate biosynthesis; chorismate from D-erythrose 4-phosphate and phosphoenolpyruvate: step 6/7. Functionally, catalyzes the transfer of the enolpyruvyl moiety of phosphoenolpyruvate (PEP) to the 5-hydroxyl of shikimate-3-phosphate (S3P) to produce enolpyruvyl shikimate-3-phosphate and inorganic phosphate. The polypeptide is 3-phosphoshikimate 1-carboxyvinyltransferase (Shewanella pealeana (strain ATCC 700345 / ANG-SQ1)).